Here is a 201-residue protein sequence, read N- to C-terminus: MSRYRGPRFKKIRRLGALPGLTSKRPRAGSDLRNQSRPGKKSQYRIRLEEKQKLRFHYGLTERQLLKYVRIARKAKGSTGQVLLQLLEMRLDNILFRLGMASTIPQARQLVNHRHILVNGRTVDIPSYRCKPRDIISARDEQKSRTLIQNYLDSSTNEELPKHLTFHTLQYKGLVNQIIDRKWVGLKINELLVVEYYSRQT.

Residues 14–43 (RLGALPGLTSKRPRAGSDLRNQSRPGKKSQ) form a disordered region. The region spanning 89–169 (MRLDNILFRL…LPKHLTFHTL (81 aa)) is the S4 RNA-binding domain.

This sequence belongs to the universal ribosomal protein uS4 family. In terms of assembly, part of the 30S ribosomal subunit. Contacts protein S5. The interaction surface between S4 and S5 is involved in control of translational fidelity.

It is found in the plastid. The protein resides in the chloroplast. In terms of biological role, one of the primary rRNA binding proteins, it binds directly to 16S rRNA where it nucleates assembly of the body of the 30S subunit. Functionally, with S5 and S12 plays an important role in translational accuracy. This chain is Small ribosomal subunit protein uS4c (rps4), found in Gossypium hirsutum (Upland cotton).